Here is a 232-residue protein sequence, read N- to C-terminus: Sugar fermentation stimulation protein homolog (232 aa).

The protein belongs to the SfsA family.

The chain is Sugar fermentation stimulation protein homolog from Acidithiobacillus ferrooxidans (strain ATCC 23270 / DSM 14882 / CIP 104768 / NCIMB 8455) (Ferrobacillus ferrooxidans (strain ATCC 23270)).